The following is a 270-amino-acid chain: Centromere protein Q (270 aa).

Residues 1 to 59 form a disordered region; it reads MSGKANTSKKKSQRVKRNVKQRADKEDEELDSPENKVGNRAKRNRSHAGHLSSKEQTKC. 2 stretches are compositionally biased toward basic residues: residues 7–20 and 39–48; these read TSKKKSQRVKRNVK and NRAKRNRSHA. A Phosphoserine modification is found at serine 52. Residues 143–205 adopt a coiled-coil conformation; that stretch reads LKVEREQERA…EEEMKEVFHI (63 aa).

Belongs to the CENP-Q/OKP1 family. In terms of assembly, component of the CENPA-CAD complex, composed of CENPI, CENPK, CENPL, CENPO, CENPP, CENPQ, CENPR and CENPS. The CENPA-CAD complex interacts with the CENPA-NAC complex, at least composed of CENPA, CENPC, CENPH, CENPM, CENPN, CENPT and CENPU. Phosphorylation at Ser-52 is essential for CENPE recruitment to kinetochores and orderly chromosome congression.

Its subcellular location is the nucleus. The protein resides in the chromosome. It localises to the centromere. Component of the CENPA-CAD (nucleosome distal) complex, a complex recruited to centromeres which is involved in assembly of kinetochore proteins, mitotic progression and chromosome segregation. May be involved in incorporation of newly synthesized CENPA into centromeres via its interaction with the CENPA-NAC complex. Plays an important role in chromosome congression and in the recruitment of CENP-O complex (which comprises CENPO, CENPP, CENPQ and CENPU), CENPE and PLK1 to the kinetochores. The sequence is that of Centromere protein Q (Cenpq) from Rattus norvegicus (Rat).